A 154-amino-acid polypeptide reads, in one-letter code: Ribonuclease H (154 aa).

An RNase H type-1 domain is found at 1-142 (MTPKLVIYTD…ADELARLGML (142 aa)). The Mg(2+) site is built by aspartate 10, glutamate 48, aspartate 70, and aspartate 134.

Belongs to the RNase H family. As to quaternary structure, monomer. Requires Mg(2+) as cofactor.

It localises to the cytoplasm. The catalysed reaction is Endonucleolytic cleavage to 5'-phosphomonoester.. In terms of biological role, endonuclease that specifically degrades the RNA of RNA-DNA hybrids. In Caulobacter sp. (strain K31), this protein is Ribonuclease H.